A 419-amino-acid chain; its full sequence is Gamma-glutamyl phosphate reductase (419 aa).

This sequence belongs to the gamma-glutamyl phosphate reductase family.

The protein resides in the cytoplasm. It catalyses the reaction L-glutamate 5-semialdehyde + phosphate + NADP(+) = L-glutamyl 5-phosphate + NADPH + H(+). Its pathway is amino-acid biosynthesis; L-proline biosynthesis; L-glutamate 5-semialdehyde from L-glutamate: step 2/2. In terms of biological role, catalyzes the NADPH-dependent reduction of L-glutamate 5-phosphate into L-glutamate 5-semialdehyde and phosphate. The product spontaneously undergoes cyclization to form 1-pyrroline-5-carboxylate. This chain is Gamma-glutamyl phosphate reductase, found in Solidesulfovibrio magneticus (strain ATCC 700980 / DSM 13731 / RS-1) (Desulfovibrio magneticus).